A 799-amino-acid polypeptide reads, in one-letter code: MPRRVRAQKRTAGVVEDEEVKAEQVRREHKAKQKQAVGSDAEQEEEELFPDSLHGPDSESDVTDDEQIDEEARQADRDLLKELVTLQGLNGEDPSDADNDDDDDEEEAASDDDDEEEDAEPSSDSSNEASDAGQEEGTTDPHTTTDDKASATTQMVVYSSDDDTSDEEHSLNRVGRIPMEWYEDYEHIGYDLNGKRIRKPKQKDRLEKFLDAFEAGNNGRTIYDPVTGKEIELTDDDINMIKRIQSGQLPDTGINPYEDYVDFFTHEKMQTPVVDKPEPKRRFVPSKWEHKKIMKIVRSIRKGLIKLPTSDDEKDKSSEEEQYYDVWGNEDDPNDPRIKVRQANHIAAPKVALPHHAESYNPPEEYLPTDAEAEKWRNAHEDDRERNYLPHKYGSLRLVPAYDQYIQERFHRCLDLYLCPRARRIRMNVDPEDLLPKLPKPEDLQPFPSAPSLVYRGHKARVTSISCDPTGQWLVSGSDDKTIRVWEISTGRCVRVVTVDAEVNMVAWCPNAGVSIVAVAHGHTVSLICPRVATAAIDKATAVLCNQSIEKPSQGAEEGMRATPTWNRIRGERQDQDGIFFEIPHHAEVMQVTWHHKGNYFASVMPRAETQSVCVHSLNRQSTQHPFQKRNRDVQRVLFHPTQPLFFVATKTHVRVYNLQAQALVKKLLTGVRWLSSLAIHPAGDNLIIGSYDKRLCWFDMDLSIKPYKILRYHKYALRQVCFHKKYPIFASCGDDGNVHVLHGMVYNDLGQNPLIVPVKIIKAHNQTSDGMGVMDCTFHPSQPWLFSAGSDGSIKLHV.

The segment at 1-171 (MPRRVRAQKR…DDTSDEEHSL (171 aa)) is disordered. Residues 58-69 (SESDVTDDEQID) are compositionally biased toward acidic residues. A compositionally biased stretch (basic and acidic residues) spans 70–81 (EEARQADRDLLK). Residues 93-121 (DPSDADNDDDDDEEEAASDDDDEEEDAEP) are compositionally biased toward acidic residues. The span at 122-132 (SSDSSNEASDA) shows a compositional bias: low complexity. WD repeat units lie at residues 457–498 (GHKA…RVVT), 500–538 (DAEVNMVAWCPNAGVSIVAVAHGHTVSLICPRVATAAID), 584–626 (PHHA…TQHP), 629–669 (KRNR…KKLL), 670–709 (TGVRWLSSLAIHPAGDNLIIGSYDKRLCWFDMDLSIKPYK), 713–752 (YHKYALRQVCFHKKYPIFASCGDDGNVHVLHGMVYNDLGQ), and 769–799 (SDGMGVMDCTFHPSQPWLFSAGSDGSIKLHV).

The protein belongs to the WD repeat BOP1/ERB1 family.

It is found in the nucleus. The protein localises to the nucleolus. It localises to the nucleoplasm. In terms of biological role, required for maturation of ribosomal RNAs and formation of the large ribosomal subunit. In Monosiga brevicollis (Choanoflagellate), this protein is Ribosome biogenesis protein BOP1 homolog.